The chain runs to 263 residues: MDCPSCKVSYDEEVFTDNLMVCPHCNCHLRIEPRQRITYLTDENSFQELYPNLKTCNPIEMEGYEEKISAAEEKASLNEAVITGSCKIKGRDALLALMSFHFMGGSMGSVVGEKISRLMLKGATERIPVIIYATSGGARMQEGLFSLMQMAKTSSAAAELDEKGVPLFIMLCDPTTGGVTASFAMLGDITAAEPGALIGFAGPRVIEGTIRQQLPEGFQRAEFQLEKGFVDCIVPRQEQRQFFARMIDAHSLGLKETPKKKKA.

Residues 1-263 (MDCPSCKVSY…LKETPKKKKA (263 aa)) form the CoA carboxyltransferase N-terminal domain. Zn(2+) contacts are provided by Cys3, Cys6, Cys22, and Cys25. The C4-type zinc-finger motif lies at 3–25 (CPSCKVSYDEEVFTDNLMVCPHC).

This sequence belongs to the AccD/PCCB family. As to quaternary structure, acetyl-CoA carboxylase is a heterohexamer composed of biotin carboxyl carrier protein (AccB), biotin carboxylase (AccC) and two subunits each of ACCase subunit alpha (AccA) and ACCase subunit beta (AccD). The cofactor is Zn(2+).

The protein resides in the cytoplasm. The enzyme catalyses N(6)-carboxybiotinyl-L-lysyl-[protein] + acetyl-CoA = N(6)-biotinyl-L-lysyl-[protein] + malonyl-CoA. It participates in lipid metabolism; malonyl-CoA biosynthesis; malonyl-CoA from acetyl-CoA: step 1/1. Functionally, component of the acetyl coenzyme A carboxylase (ACC) complex. Biotin carboxylase (BC) catalyzes the carboxylation of biotin on its carrier protein (BCCP) and then the CO(2) group is transferred by the transcarboxylase to acetyl-CoA to form malonyl-CoA. In Treponema denticola (strain ATCC 35405 / DSM 14222 / CIP 103919 / JCM 8153 / KCTC 15104), this protein is Acetyl-coenzyme A carboxylase carboxyl transferase subunit beta.